We begin with the raw amino-acid sequence, 441 residues long: tRNA-2-methylthio-N(6)-dimethylallyladenosine synthase (441 aa).

Residues 2–117 (KGLYIKSYGC…LPELLVKAHR (116 aa)) enclose the MTTase N-terminal domain. [4Fe-4S] cluster is bound by residues cysteine 11, cysteine 47, cysteine 80, cysteine 157, cysteine 161, and cysteine 164. The region spanning 143–374 (KNQETSAFIS…QKLLREQQLA (232 aa)) is the Radical SAM core domain.

Belongs to the methylthiotransferase family. MiaB subfamily. As to quaternary structure, monomer. [4Fe-4S] cluster is required as a cofactor.

The protein localises to the cytoplasm. The enzyme catalyses N(6)-dimethylallyladenosine(37) in tRNA + (sulfur carrier)-SH + AH2 + 2 S-adenosyl-L-methionine = 2-methylsulfanyl-N(6)-dimethylallyladenosine(37) in tRNA + (sulfur carrier)-H + 5'-deoxyadenosine + L-methionine + A + S-adenosyl-L-homocysteine + 2 H(+). Functionally, catalyzes the methylthiolation of N6-(dimethylallyl)adenosine (i(6)A), leading to the formation of 2-methylthio-N6-(dimethylallyl)adenosine (ms(2)i(6)A) at position 37 in tRNAs that read codons beginning with uridine. This Ehrlichia canis (strain Jake) protein is tRNA-2-methylthio-N(6)-dimethylallyladenosine synthase.